Reading from the N-terminus, the 175-residue chain is MLTSGIILLEGGLLNPNPGLIFWTALTFLIVLVILRKTAWGPILSMLEERAKSIQSAIDRAHTAKDEAEAILKKNRDLLAKADAEADKIIREAKEVADKLRADLTEKAHDESRKIIASAKEEIEQEKRRALDVLRNEVADMAVKGAEKIIRTTLDADKQKAVVNDMIKEMAASRN.

Residues 14–34 (LNPNPGLIFWTALTFLIVLVI) traverse the membrane as a helical segment.

This sequence belongs to the ATPase B chain family. F-type ATPases have 2 components, F(1) - the catalytic core - and F(0) - the membrane proton channel. F(1) has five subunits: alpha(3), beta(3), gamma(1), delta(1), epsilon(1). F(0) has four main subunits: a(1), b(2) and c(10-14). The alpha and beta chains form an alternating ring which encloses part of the gamma chain. F(1) is attached to F(0) by a central stalk formed by the gamma and epsilon chains, while a peripheral stalk is formed by the delta and b chains.

It localises to the cell inner membrane. F(1)F(0) ATP synthase produces ATP from ADP in the presence of a proton or sodium gradient. F-type ATPases consist of two structural domains, F(1) containing the extramembraneous catalytic core and F(0) containing the membrane proton channel, linked together by a central stalk and a peripheral stalk. During catalysis, ATP synthesis in the catalytic domain of F(1) is coupled via a rotary mechanism of the central stalk subunits to proton translocation. Its function is as follows. Component of the F(0) channel, it forms part of the peripheral stalk, linking F(1) to F(0). This Chlorobaculum tepidum (strain ATCC 49652 / DSM 12025 / NBRC 103806 / TLS) (Chlorobium tepidum) protein is ATP synthase subunit b.